The sequence spans 398 residues: Elongation factor Tu (398 aa).

The region spanning 10-207 (KPHVNIGTIG…TVDEYIPEPE (198 aa)) is the tr-type G domain. Residues 19-26 (GHVDHGKT) form a G1 region. Residue 19-26 (GHVDHGKT) participates in GTP binding. Thr-26 contacts Mg(2+). The interval 63–67 (GITIN) is G2. Positions 84 to 87 (DAPG) are G3. GTP contacts are provided by residues 84–88 (DAPGH) and 139–142 (NKVD). The tract at residues 139–142 (NKVD) is G4. A G5 region spans residues 177-179 (SAL).

Belongs to the TRAFAC class translation factor GTPase superfamily. Classic translation factor GTPase family. EF-Tu/EF-1A subfamily. Monomer.

The protein resides in the cytoplasm. It catalyses the reaction GTP + H2O = GDP + phosphate + H(+). GTP hydrolase that promotes the GTP-dependent binding of aminoacyl-tRNA to the A-site of ribosomes during protein biosynthesis. The polypeptide is Elongation factor Tu (Streptococcus agalactiae serotype V (strain ATCC BAA-611 / 2603 V/R)).